The primary structure comprises 294 residues: GTPase Era (294 aa).

The region spanning 3–170 (KSGFISIIGR…LELMIKYMPE (168 aa)) is the Era-type G domain. The interval 11-18 (GRPNVGKS) is G1. GTP is bound at residue 11-18 (GRPNVGKS). The segment at 37-41 (QTTRN) is G2. The interval 58–61 (DTPG) is G3. GTP contacts are provided by residues 58–62 (DTPGI) and 120–123 (NKID). A G4 region spans residues 120 to 123 (NKID). The interval 149-151 (ISA) is G5. The KH type-2 domain occupies 201-278 (LSEEVPHGIA…NLKVWVKVKK (78 aa)).

Belongs to the TRAFAC class TrmE-Era-EngA-EngB-Septin-like GTPase superfamily. Era GTPase family. As to quaternary structure, monomer.

The protein resides in the cytoplasm. It localises to the cell membrane. Functionally, an essential GTPase that binds both GDP and GTP, with rapid nucleotide exchange. Plays a role in 16S rRNA processing and 30S ribosomal subunit biogenesis and possibly also in cell cycle regulation and energy metabolism. This Clostridium novyi (strain NT) protein is GTPase Era.